Here is a 560-residue protein sequence, read N- to C-terminus: 2-succinyl-5-enolpyruvyl-6-hydroxy-3-cyclohexene-1-carboxylate synthase (560 aa).

Belongs to the TPP enzyme family. MenD subfamily. Homodimer. Mg(2+) is required as a cofactor. Mn(2+) serves as cofactor. Requires thiamine diphosphate as cofactor.

It catalyses the reaction isochorismate + 2-oxoglutarate + H(+) = 5-enolpyruvoyl-6-hydroxy-2-succinyl-cyclohex-3-ene-1-carboxylate + CO2. Its pathway is quinol/quinone metabolism; 1,4-dihydroxy-2-naphthoate biosynthesis; 1,4-dihydroxy-2-naphthoate from chorismate: step 2/7. It participates in quinol/quinone metabolism; menaquinone biosynthesis. In terms of biological role, catalyzes the thiamine diphosphate-dependent decarboxylation of 2-oxoglutarate and the subsequent addition of the resulting succinic semialdehyde-thiamine pyrophosphate anion to isochorismate to yield 2-succinyl-5-enolpyruvyl-6-hydroxy-3-cyclohexene-1-carboxylate (SEPHCHC). This Lactococcus lactis subsp. lactis (strain IL1403) (Streptococcus lactis) protein is 2-succinyl-5-enolpyruvyl-6-hydroxy-3-cyclohexene-1-carboxylate synthase.